We begin with the raw amino-acid sequence, 324 residues long: Glyoxylate/hydroxypyruvate reductase B (324 aa).

Catalysis depends on residues Arg-237 and Glu-266. The active-site Proton donor is the His-285.

Belongs to the D-isomer specific 2-hydroxyacid dehydrogenase family. GhrB subfamily. As to quaternary structure, homodimer.

It is found in the cytoplasm. The enzyme catalyses glycolate + NADP(+) = glyoxylate + NADPH + H(+). It carries out the reaction (R)-glycerate + NAD(+) = 3-hydroxypyruvate + NADH + H(+). It catalyses the reaction (R)-glycerate + NADP(+) = 3-hydroxypyruvate + NADPH + H(+). Its function is as follows. Catalyzes the NADPH-dependent reduction of glyoxylate and hydroxypyruvate into glycolate and glycerate, respectively. The sequence is that of Glyoxylate/hydroxypyruvate reductase B from Salmonella heidelberg (strain SL476).